The primary structure comprises 329 residues: Ankyrin repeat and SOCS box protein 5 (329 aa).

ANK repeat units follow at residues 69-98 (ADRS…NVNA), 102-131 (DHVT…NVNA), 135-164 (DGVT…KAQL), 167-196 (CLPS…DVDQ), 200-229 (HLGT…DVQK), and 232-261 (YWDT…DINA). Residues 278–329 (MVERILLQHEATPSSLYQLCRLCIRSYIGKPRLHLIPQLQLPTLLKNFLQYR) enclose the SOCS box domain.

This sequence belongs to the ankyrin SOCS box (ASB) family.

The protein operates within protein modification; protein ubiquitination. May be a substrate-recognition component of a SCF-like ECS (Elongin-Cullin-SOCS-box protein) E3 ubiquitin-protein ligase complex which mediates the ubiquitination and subsequent proteasomal degradation of target proteins. May play a role in the initiation of arteriogenesis. This is Ankyrin repeat and SOCS box protein 5 (ASB5) from Homo sapiens (Human).